Here is a 140-residue protein sequence, read N- to C-terminus: MRIMGLDVGSRTVGVAVSDLLGWTAQGIEIIRINEEEENFGFERLGELVKEYEVTKFVVGLPKNMNNSIGPRAEASMAYGDKIQELFQLPVDYQDERLTTVQAERFLVEQADASRAKRKKVIDKLAAVMILQNYLDAHSR.

The protein belongs to the YqgF nuclease family.

Its subcellular location is the cytoplasm. Could be a nuclease involved in processing of the 5'-end of pre-16S rRNA. The protein is Putative pre-16S rRNA nuclease of Enterococcus faecalis (strain ATCC 700802 / V583).